The chain runs to 434 residues: Enolase (434 aa).

Gln165 is a (2R)-2-phosphoglycerate binding site. The active-site Proton donor is Glu207. Residues Asp244, Glu291, and Asp318 each coordinate Mg(2+). (2R)-2-phosphoglycerate-binding residues include Lys343, Arg372, Ser373, and Lys394. Lys343 acts as the Proton acceptor in catalysis.

Belongs to the enolase family. Mg(2+) is required as a cofactor.

It localises to the cytoplasm. Its subcellular location is the secreted. The protein resides in the cell surface. The enzyme catalyses (2R)-2-phosphoglycerate = phosphoenolpyruvate + H2O. It participates in carbohydrate degradation; glycolysis; pyruvate from D-glyceraldehyde 3-phosphate: step 4/5. Its function is as follows. Catalyzes the reversible conversion of 2-phosphoglycerate (2-PG) into phosphoenolpyruvate (PEP). It is essential for the degradation of carbohydrates via glycolysis. This Staphylococcus epidermidis (strain ATCC 35984 / DSM 28319 / BCRC 17069 / CCUG 31568 / BM 3577 / RP62A) protein is Enolase.